Consider the following 912-residue polypeptide: Androgen receptor (912 aa).

Residues 1 to 550 are modulating; that stretch reads MEVQLGLGRV…PIDYYFPPQK (550 aa). Residues 1–579 are interaction with ZNF318; the sequence is MEVQLGLGRV…GSCKVFFKRA (579 aa). Disordered regions lie at residues 35 to 156 and 204 to 236; these read QNPG…GPTF and QQQQ…YLGG. The residue at position 69 (serine 69) is a Phosphoserine; by CDK9. Serine 82 is subject to Phosphoserine. The span at 204–213 shows a compositional bias: low complexity; sequence QQQQEVVSEG. The segment covering 226-236 has biased composition (polar residues); that stretch reads PTSSKDSYLGG. Tyrosine 233 is subject to Phosphotyrosine; by CSK. The residue at position 266 (serine 266) is a Phosphoserine. A Phosphotyrosine; by CSK and TNK2 modification is found at tyrosine 277. A phosphotyrosine; by CSK mark is found at tyrosine 315, tyrosine 354, tyrosine 365, and tyrosine 370. Phosphotyrosine; by CSK and TNK2 is present on tyrosine 371. The disordered stretch occupies residues 375-394; that stretch reads LSLAGPPPPPPSPHPHARIK. Pro residues predominate over residues 379-388; that stretch reads GPPPPPPSPH. Lysine 394 is covalently cross-linked (Glycyl lysine isopeptide (Lys-Gly) (interchain with G-Cter in SUMO)). Phosphotyrosine; by CSK is present on tyrosine 401. The segment at 452-490 is disordered; that stretch reads LYGPCGGSGGGGTGESVSVTPYGYTRPQQGLTGQEGDFP. Positions 455–465 are enriched in gly residues; that stretch reads PCGGSGGGGTG. Lysine 513 is covalently cross-linked (Glycyl lysine isopeptide (Lys-Gly) (interchain with G-Cter in SUMO)). 2 positions are modified to phosphotyrosine; by CSK: tyrosine 527 and tyrosine 544. The segment at 544–911 is interaction with LPXN; that stretch reads YYFPPQKTCL…GKVKPIYFHT (368 aa). Positions 551–624 form a DNA-binding region, nuclear receptor; sequence TCLICGDEAS…AGMTLGARRL (74 aa). 2 consecutive NR C4-type zinc fingers follow at residues 552–572 and 588–612; these read CLIC…CGSC and CASR…LRKC. The segment at 564–654 is interaction with HIPK3; the sequence is YGALTCGSCK…TEETTQKLTV (91 aa). The tract at residues 584 to 911 is interaction with CCAR1; it reads QKYLCASRND…GKVKPIYFHT (328 aa). Residues 617 to 911 form an interaction with KAT7 region; it reads MTLGARRLKK…GKVKPIYFHT (295 aa). A Phosphoserine; by STK4/MST1 modification is found at serine 643. One can recognise an NR LBD domain in the interval 661 to 892; the sequence is ECQPIFLNVL…DFPEMMAEII (232 aa). 17beta-hydroxy-5alpha-androstan-3-one-binding residues include asparagine 698 and arginine 745. Glycyl lysine isopeptide (Lys-Gly) (interchain with G-Cter in ubiquitin) cross-links involve residues lysine 838 and lysine 840. A 17beta-hydroxy-5alpha-androstan-3-one-binding site is contributed by threonine 870. Tyrosine 908 is modified (phosphotyrosine; by CSK).

This sequence belongs to the nuclear hormone receptor family. NR3 subfamily. In terms of assembly, binds DNA as a homodimer. Part of a ternary complex containing AR, EFCAB6/DJBP and PARK7. Interacts with HIPK3 and NR0B2 in the presence of androgen. The ligand binding domain interacts with KAT7/HBO1 in the presence of dihydrotestosterone. Interacts with EFCAB6/DJBP, PQBP1, RANBP9, RBAK, SPDEF, SRA1, TGFB1I1 and RREB1. Interacts with ZMIZ1/ZIMP10 and ZMIZ2/ZMIP7 which both enhance its transactivation activity. Interacts with SLC30A9 and RAD54L2/ARIP4. Interacts with MACROD1 (via macro domain). Interacts via the ligand-binding domain with LXXLL and FXXLF motifs from NCOA1, NCOA2, NCOA3 and MAGEA11. Interacts (via nuclear receptor DNA binding domain and nuclear receptor ligand binding domain) with NCOA4. The AR N-terminal poly-Gln region binds Ran resulting in enhancement of AR-mediated transactivation. Ran-binding decreases as the poly-Gln length increases. Interacts with HIP1 (via coiled coil domain). Interacts (via ligand-binding domain) with TRIM68. Interacts with TNK2. Interacts with USP26. Interacts with RNF6. Interacts (regulated by RNF6 probably through polyubiquitination) with RNF14; regulates AR transcriptional activity. Interacts with PRMT2 and TRIM24. Interacts with RACK1. Interacts with RANBP10; this interaction enhances dihydrotestosterone-induced AR transcriptional activity. Interacts with PRPF6 in a hormone-independent way; this interaction enhances dihydrotestosterone-induced AR transcriptional activity. Interacts with STK4/MST1. Interacts with ZIPK/DAPK3. Interacts with LPXN. Interacts with MAK. Part of a complex containing AR, MAK and NCOA3. Interacts with CRY1. Interacts with CCAR1 and GATA2. Interacts with ZNF318. Interacts with BUD31. Interacts with ARID4A. Interacts with ARID4B. Interacts (via NR LBD domain) with ZBTB7A; the interaction is direct and androgen-dependent. Interacts with NCOR1. Interacts with NCOR2. Interacts with CRY2 in a ligand-dependent manner. Post-translationally, phosphorylation by TNK2 enhances the DNA-binding and transcriptional activity. Phosphorylation at Ser-69 by CDK9 regulates AR promoter selectivity and cell growth. Sumoylated on Lys-394 (major) and Lys-513. Ubiquitinated. Deubiquitinated by USP26. 'Lys-6' and 'Lys-27'-linked polyubiquitination by RNF6 modulates AR transcriptional activity and specificity. In terms of processing, palmitoylated by ZDHHC7 and ZDHHC21. Palmitoylation is required for plasma membrane targeting and for rapid intracellular signaling via ERK and AKT kinases and cAMP generation.

Its subcellular location is the nucleus. The protein localises to the cytoplasm. In terms of biological role, steroid hormone receptors are ligand-activated transcription factors that regulate eukaryotic gene expression and affect cellular proliferation and differentiation in target tissues. Transcription factor activity is modulated by bound coactivator and corepressor proteins like ZBTB7A that recruits NCOR1 and NCOR2 to the androgen response elements/ARE on target genes, negatively regulating androgen receptor signaling and androgen-induced cell proliferation. Transcription activation is also down-regulated by NR0B2. Activated, but not phosphorylated, by HIPK3 and ZIPK/DAPK3. This Crocuta crocuta (Spotted hyena) protein is Androgen receptor (AR).